The sequence spans 234 residues: 1-(5-phosphoribosyl)-5-[(5-phosphoribosylamino)methylideneamino] imidazole-4-carboxamide isomerase (234 aa).

Aspartate 9 functions as the Proton acceptor in the catalytic mechanism. The active-site Proton donor is aspartate 131.

The protein belongs to the HisA/HisF family.

It localises to the cytoplasm. It carries out the reaction 1-(5-phospho-beta-D-ribosyl)-5-[(5-phospho-beta-D-ribosylamino)methylideneamino]imidazole-4-carboxamide = 5-[(5-phospho-1-deoxy-D-ribulos-1-ylimino)methylamino]-1-(5-phospho-beta-D-ribosyl)imidazole-4-carboxamide. It participates in amino-acid biosynthesis; L-histidine biosynthesis; L-histidine from 5-phospho-alpha-D-ribose 1-diphosphate: step 4/9. This chain is 1-(5-phosphoribosyl)-5-[(5-phosphoribosylamino)methylideneamino] imidazole-4-carboxamide isomerase, found in Staphylococcus aureus (strain bovine RF122 / ET3-1).